The following is a 345-amino-acid chain: Adenine deaminase (345 aa).

Residues H20, H22, and H204 each coordinate Zn(2+). The Proton donor role is filled by E207. Zn(2+) is bound at residue D285. D286 is a binding site for substrate.

The protein belongs to the metallo-dependent hydrolases superfamily. Adenosine and AMP deaminases family. Adenine deaminase type 2 subfamily. It depends on Zn(2+) as a cofactor.

The catalysed reaction is adenine + H2O + H(+) = hypoxanthine + NH4(+). Catalyzes the hydrolytic deamination of adenine to hypoxanthine. Plays an important role in the purine salvage pathway and in nitrogen catabolism. The sequence is that of Adenine deaminase from Ralstonia nicotianae (strain ATCC BAA-1114 / GMI1000) (Ralstonia solanacearum).